A 197-amino-acid polypeptide reads, in one-letter code: UPF0319 protein VP0761 (197 aa).

The signal sequence occupies residues 1-20 (MKKTTTLLGICAILSAPAFA).

This sequence belongs to the UPF0319 family.

The protein is UPF0319 protein VP0761 of Vibrio parahaemolyticus serotype O3:K6 (strain RIMD 2210633).